The chain runs to 949 residues: Glycine dehydrogenase (decarboxylating) (949 aa).

At Lys-697 the chain carries N6-(pyridoxal phosphate)lysine.

The protein belongs to the GcvP family. As to quaternary structure, the glycine cleavage system is composed of four proteins: P, T, L and H. Pyridoxal 5'-phosphate serves as cofactor.

The enzyme catalyses N(6)-[(R)-lipoyl]-L-lysyl-[glycine-cleavage complex H protein] + glycine + H(+) = N(6)-[(R)-S(8)-aminomethyldihydrolipoyl]-L-lysyl-[glycine-cleavage complex H protein] + CO2. The glycine cleavage system catalyzes the degradation of glycine. The P protein binds the alpha-amino group of glycine through its pyridoxal phosphate cofactor; CO(2) is released and the remaining methylamine moiety is then transferred to the lipoamide cofactor of the H protein. The protein is Glycine dehydrogenase (decarboxylating) of Deinococcus radiodurans (strain ATCC 13939 / DSM 20539 / JCM 16871 / CCUG 27074 / LMG 4051 / NBRC 15346 / NCIMB 9279 / VKM B-1422 / R1).